The following is a 326-amino-acid chain: Tetraacyldisaccharide 4'-kinase (326 aa).

53–60 (SVGGNGKT) provides a ligand contact to ATP.

It belongs to the LpxK family.

It catalyses the reaction a lipid A disaccharide + ATP = a lipid IVA + ADP + H(+). Its pathway is glycolipid biosynthesis; lipid IV(A) biosynthesis; lipid IV(A) from (3R)-3-hydroxytetradecanoyl-[acyl-carrier-protein] and UDP-N-acetyl-alpha-D-glucosamine: step 6/6. In terms of biological role, transfers the gamma-phosphate of ATP to the 4'-position of a tetraacyldisaccharide 1-phosphate intermediate (termed DS-1-P) to form tetraacyldisaccharide 1,4'-bis-phosphate (lipid IVA). This is Tetraacyldisaccharide 4'-kinase from Actinobacillus pleuropneumoniae serotype 7 (strain AP76).